The chain runs to 517 residues: tRNA-2-methylthio-N(6)-dimethylallyladenosine synthase (517 aa).

Residues 29–146 (RTYQVRTYGC…LPTLLERARH (118 aa)) form the MTTase N-terminal domain. 6 residues coordinate [4Fe-4S] cluster: C38, C75, C109, C183, C187, and C190. One can recognise a Radical SAM core domain in the interval 169–405 (RESAYAAWVS…VELQESISLQ (237 aa)). The TRAM domain maps to 408–475 (QALVGQTVEL…PHHLIADAGV (68 aa)).

This sequence belongs to the methylthiotransferase family. MiaB subfamily. As to quaternary structure, monomer. [4Fe-4S] cluster is required as a cofactor.

It is found in the cytoplasm. The catalysed reaction is N(6)-dimethylallyladenosine(37) in tRNA + (sulfur carrier)-SH + AH2 + 2 S-adenosyl-L-methionine = 2-methylsulfanyl-N(6)-dimethylallyladenosine(37) in tRNA + (sulfur carrier)-H + 5'-deoxyadenosine + L-methionine + A + S-adenosyl-L-homocysteine + 2 H(+). Catalyzes the methylthiolation of N6-(dimethylallyl)adenosine (i(6)A), leading to the formation of 2-methylthio-N6-(dimethylallyl)adenosine (ms(2)i(6)A) at position 37 in tRNAs that read codons beginning with uridine. This Mycolicibacterium paratuberculosis (strain ATCC BAA-968 / K-10) (Mycobacterium paratuberculosis) protein is tRNA-2-methylthio-N(6)-dimethylallyladenosine synthase.